A 132-amino-acid polypeptide reads, in one-letter code: Small ribosomal subunit protein uS11 (132 aa).

The disordered stretch occupies residues 1-21 (MAAPKSAVRKPRRKDKKNIAV). Residues 7–16 (AVRKPRRKDK) are compositionally biased toward basic residues.

The protein belongs to the universal ribosomal protein uS11 family. Part of the 30S ribosomal subunit. Interacts with proteins S7 and S18. Binds to IF-3.

Located on the platform of the 30S subunit, it bridges several disparate RNA helices of the 16S rRNA. Forms part of the Shine-Dalgarno cleft in the 70S ribosome. This chain is Small ribosomal subunit protein uS11, found in Clavibacter sepedonicus (Clavibacter michiganensis subsp. sepedonicus).